The chain runs to 255 residues: Indole-3-glycerol phosphate synthase (255 aa).

The protein belongs to the TrpC family.

It carries out the reaction 1-(2-carboxyphenylamino)-1-deoxy-D-ribulose 5-phosphate + H(+) = (1S,2R)-1-C-(indol-3-yl)glycerol 3-phosphate + CO2 + H2O. The protein operates within amino-acid biosynthesis; L-tryptophan biosynthesis; L-tryptophan from chorismate: step 4/5. The protein is Indole-3-glycerol phosphate synthase of Streptococcus gordonii (strain Challis / ATCC 35105 / BCRC 15272 / CH1 / DL1 / V288).